We begin with the raw amino-acid sequence, 188 residues long: Peptide deformylase (188 aa).

2 residues coordinate Fe cation: Cys-107 and His-149. Residue Glu-150 is part of the active site. His-153 serves as a coordination point for Fe cation.

This sequence belongs to the polypeptide deformylase family. It depends on Fe(2+) as a cofactor.

It carries out the reaction N-terminal N-formyl-L-methionyl-[peptide] + H2O = N-terminal L-methionyl-[peptide] + formate. Functionally, removes the formyl group from the N-terminal Met of newly synthesized proteins. Requires at least a dipeptide for an efficient rate of reaction. N-terminal L-methionine is a prerequisite for activity but the enzyme has broad specificity at other positions. This chain is Peptide deformylase, found in Thermosynechococcus vestitus (strain NIES-2133 / IAM M-273 / BP-1).